A 124-amino-acid polypeptide reads, in one-letter code: Chemotaxis protein CheY1 (124 aa).

Residues K2–L120 enclose the Response regulatory domain. Mg(2+) contacts are provided by D7, D8, D53, and N55. D53 is modified (4-aspartylphosphate).

In terms of assembly, interacts (when phosphorylated) with FliM. Mg(2+) is required as a cofactor. In terms of processing, phosphorylated by CheAY. Dephosphorylated (inactivated) by CheZ.

It is found in the cytoplasm. Functionally, chemotactic response regulator protein that modulates the rotation direction of bacterial flagellar motors. Plays an important role in the colonization and infection of Helicobacter pylori. Upon phosphorylation by CheA, interacts with the flagellar motor protein FliM to cause clockwise flagellar rotation and bacterial reversals, as opposed to straight swimming when CheY1 is not phosphorylated. The polypeptide is Chemotaxis protein CheY1 (cheY1) (Helicobacter pylori (strain J99 / ATCC 700824) (Campylobacter pylori J99)).